Here is a 354-residue protein sequence, read N- to C-terminus: LAS seventeen-binding protein 5 (354 aa).

Positions 15–161 constitute a VHS domain; sequence TIFRIVSSRD…LGQTVKQRYS (147 aa). Disordered regions lie at residues 160–184 and 296–354; these read YSKS…DDSA and SAQD…HNKI. The span at 296 to 310 shows a compositional bias: basic and acidic residues; the sequence is SAQDDSSDESDHGSY.

The protein belongs to the LSB5 family. In terms of assembly, interacts with SLA1 and LAS17.

Its subcellular location is the cytoplasm. It localises to the cell cortex. The protein resides in the cytoskeleton. Its function is as follows. Essential for the organization of the actin cytoskeleton, fluid phase endocytosis and vesicle trafficking, together with YSC84. The chain is LAS seventeen-binding protein 5 (LSB5) from Saccharomyces cerevisiae (strain ATCC 204508 / S288c) (Baker's yeast).